The following is a 679-amino-acid chain: Glycine--tRNA ligase beta subunit (679 aa).

It belongs to the class-II aminoacyl-tRNA synthetase family. In terms of assembly, tetramer of two alpha and two beta subunits.

It localises to the cytoplasm. The enzyme catalyses tRNA(Gly) + glycine + ATP = glycyl-tRNA(Gly) + AMP + diphosphate. The chain is Glycine--tRNA ligase beta subunit from Streptococcus pyogenes serotype M28 (strain MGAS6180).